The primary structure comprises 293 residues: 4-diphosphocytidyl-2-C-methyl-D-erythritol kinase (293 aa).

The active site involves Lys16. Pro99–Ser109 is an ATP binding site. Asp141 is a catalytic residue.

Belongs to the GHMP kinase family. IspE subfamily.

It carries out the reaction 4-CDP-2-C-methyl-D-erythritol + ATP = 4-CDP-2-C-methyl-D-erythritol 2-phosphate + ADP + H(+). It functions in the pathway isoprenoid biosynthesis; isopentenyl diphosphate biosynthesis via DXP pathway; isopentenyl diphosphate from 1-deoxy-D-xylulose 5-phosphate: step 3/6. In terms of biological role, catalyzes the phosphorylation of the position 2 hydroxy group of 4-diphosphocytidyl-2C-methyl-D-erythritol. In Burkholderia mallei (strain NCTC 10247), this protein is 4-diphosphocytidyl-2-C-methyl-D-erythritol kinase.